Reading from the N-terminus, the 337-residue chain is Glyceraldehyde-3-phosphate dehydrogenase (337 aa).

Residues 12-13 (RI), D34, and K79 contribute to the NAD(+) site. D-glyceraldehyde 3-phosphate is bound by residues 150 to 152 (SCT), T181, 210 to 211 (TG), and R233. C151 (nucleophile) is an active-site residue. N315 serves as a coordination point for NAD(+).

Belongs to the glyceraldehyde-3-phosphate dehydrogenase family. In terms of assembly, homotetramer.

It is found in the cytoplasm. The catalysed reaction is D-glyceraldehyde 3-phosphate + phosphate + NAD(+) = (2R)-3-phospho-glyceroyl phosphate + NADH + H(+). It participates in carbohydrate degradation; glycolysis; pyruvate from D-glyceraldehyde 3-phosphate: step 1/5. The sequence is that of Glyceraldehyde-3-phosphate dehydrogenase (GPD) from Phanerodontia chrysosporium (White-rot fungus).